We begin with the raw amino-acid sequence, 204 residues long: Large ribosomal subunit protein uL4 (204 aa).

The segment at 49-76 (KTKGISDVSGTTAKPYGQKRTGRARQGS) is disordered.

This sequence belongs to the universal ribosomal protein uL4 family. In terms of assembly, part of the 50S ribosomal subunit.

Its function is as follows. One of the primary rRNA binding proteins, this protein initially binds near the 5'-end of the 23S rRNA. It is important during the early stages of 50S assembly. It makes multiple contacts with different domains of the 23S rRNA in the assembled 50S subunit and ribosome. Functionally, forms part of the polypeptide exit tunnel. This is Large ribosomal subunit protein uL4 from Wolbachia sp. subsp. Drosophila simulans (strain wRi).